The primary structure comprises 339 residues: Serpentine receptor class alpha-20 (339 aa).

The next 6 helical transmembrane spans lie at 30-50, 113-132, 151-171, 199-219, 249-269, and 284-304; these read VSFVFLATVILLSYYFAVLAI, LYFYYLTNYFSTYSVFSLTF, VSISLLIIQLVFTLGTYYFGL, FRTTIMVFCIIVTIFIYYLNV, CILIVLQFVCISVSSFGVNYI, and IAPFVVGVTYANLCLPLVIYF.

Belongs to the nematode receptor-like protein sra family.

The protein resides in the membrane. This chain is Serpentine receptor class alpha-20 (sra-20), found in Caenorhabditis elegans.